Here is a 122-residue protein sequence, read N- to C-terminus: Ribosome-binding factor A (122 aa).

The protein belongs to the RbfA family. In terms of assembly, monomer. Binds 30S ribosomal subunits, but not 50S ribosomal subunits or 70S ribosomes.

It localises to the cytoplasm. One of several proteins that assist in the late maturation steps of the functional core of the 30S ribosomal subunit. Associates with free 30S ribosomal subunits (but not with 30S subunits that are part of 70S ribosomes or polysomes). Required for efficient processing of 16S rRNA. May interact with the 5'-terminal helix region of 16S rRNA. In Cupriavidus necator (strain ATCC 17699 / DSM 428 / KCTC 22496 / NCIMB 10442 / H16 / Stanier 337) (Ralstonia eutropha), this protein is Ribosome-binding factor A.